Here is a 595-residue protein sequence, read N- to C-terminus: Putative histone-lysine N-methyltransferase PRDM6 (595 aa).

The interval 27–90 (FPHGGAGPLK…STPASSSTSA (64 aa)) is disordered. Gly residues predominate over residues 30–40 (GGAGPLKGSGA). Residues 49–59 (PLQPPPPPPPP) show a composition bias toward pro residues. A compositionally biased stretch (low complexity) spans 71–90 (PRPASLSSASSTPASSSTSA). Residues 246 to 365 (REVCLCTSTV…RGTELLVWYN (120 aa)) form the SET domain. The C2H2-type 1; degenerate zinc-finger motif lies at 473–495 (WKCGQCFKTFTQRILLQMHVCTQ). 2 C2H2-type zinc fingers span residues 501-523 (YQCGHCSQSFSQPSELRNHVVTH) and 529-551 (FKCGYCGRAFAGATTLNNHIRTH). The C2H2-type 4; degenerate zinc finger occupies 557 to 579 (FKCERCERSFTQATQLSRHQRMP).

Belongs to the class V-like SAM-binding methyltransferase superfamily. Interacts with HDAC1, HDAC2, HDAC3, CBX1 and EP300.

It is found in the nucleus. The enzyme catalyses L-lysyl(20)-[histone H4] + S-adenosyl-L-methionine = N(6)-methyl-L-lysyl(20)-[histone H4] + S-adenosyl-L-homocysteine + H(+). In terms of biological role, putative histone methyltransferase that acts as a transcriptional repressor of smooth muscle gene expression. Promotes the transition from differentiated to proliferative smooth muscle by suppressing differentiation and maintaining the proliferative potential of vascular smooth muscle cells. Also plays a role in endothelial cells by inhibiting endothelial cell proliferation, survival and differentiation. It is unclear whether it has histone methyltransferase activity in vivo. According to some authors, it does not act as a histone methyltransferase by itself and represses transcription by recruiting EHMT2/G9a. According to others, it possesses histone methyltransferase activity when associated with other proteins and specifically methylates 'Lys-20' of histone H4 in vitro. 'Lys-20' methylation represents a specific tag for epigenetic transcriptional repression. This chain is Putative histone-lysine N-methyltransferase PRDM6 (PRDM6), found in Homo sapiens (Human).